Reading from the N-terminus, the 817-residue chain is Neurabin-2 (817 aa).

2 actin-binding regions span residues 1–154 (MMKT…FERS) and 164–283 (EAAA…QHRV). Residues 1-165 (MMKTEPRGPG…PAAAGGDKEA (165 aa)) are disordered. S15 and S17 each carry phosphoserine. A compositionally biased stretch (basic residues) spans 44-58 (GAHHKKYGSNVHRIK). A phosphoserine mark is found at S94, S100, and S116. An interaction with D(2) dopamine receptor region spans residues 100-371 (SLNENVDHSA…PERGVGNGRA (272 aa)). Over residues 131–141 (SAQPAPPPHPP) the composition is skewed to pro residues. The interaction with ADRA2A, ADRA2B and ADRA2C stretch occupies residues 169 to 255 (RLLRQERAGL…KRSRVFQPPP (87 aa)). S192 carries the phosphoserine modification. Phosphothreonine is present on T193. The residue at position 205 (S205) is a Phosphoserine. The residue at position 207 (T207) is a Phosphothreonine. A disordered region spans residues 216–447 (EKADSRTGLH…SEEEDPAPSR (232 aa)). A compositionally biased stretch (pro residues) spans 252–261 (QPPPPPPPAP). Positions 291–302 (KPREVRKIKPVE) are enriched in basic and acidic residues. Residues 333–342 (STVATAASPA) are compositionally biased toward low complexity. Residues 344–356 (EEPKAQAAPEKEA) show a composition bias toward basic and acidic residues. Residues 410 to 425 (LEEDDEDDEEDGEPPY) are compositionally biased toward acidic residues. The interval 417 to 494 (DEEDGEPPYE…LEKRVERLEL (78 aa)) is interaction with protein phosphatase 1. S438 carries the phosphoserine modification. Positions 447–451 (RKIHF) match the PP1-binding motif motif. The tract at residues 480 to 525 (SAEYELEKRVERLELFPVELEKDSEGLGISIIGMGAGADMGLEKLG) is interaction with RGS2. In terms of domain architecture, PDZ spans 496–584 (PVELEKDSEG…RVRFMIGRER (89 aa)). The tract at residues 595–816 (IQQTLEQERW…NLQTLRNSNS (222 aa)) is interaction with TGN38. Phosphoserine is present on S658. Residues 671 to 788 (FKELQIKHAV…QRRVLEESEL (118 aa)) are a coiled coil.

As to quaternary structure, interacts with DCLK2. Possibly exists as a homodimer, homotrimer or a homotetramer. Interacts with F-actin, PPP1CA, neurabin-1, TGN38 and D(2) dopamine receptor. Interacts with RGS1, RGS2, RGS4, RGS19 and ADRA1B, ADRA2A, ADRA2B, ADRA2C, CDKN2A, PPP1R2, RASGFR1 and TIAM1. Interacts (via C-terminus) with SPATA13 (via C-terminal tail). Interacts with ADRA2B. Stimulation of D1 (but not D2) dopamine receptors induces Ser-94 phosphorylation. Dephosphorylation of Ser-94 is mediated mainly by PP1 and to a lesser extent by PP2A. Phosphorylation of spinophilin disrupts its association with F-actin, but does not affect its binding to PP1.

Its subcellular location is the cytoplasm. The protein resides in the cytoskeleton. It is found in the nucleus. It localises to the cell projection. The protein localises to the dendritic spine. Its subcellular location is the postsynaptic density. The protein resides in the synapse. It is found in the cell junction. It localises to the adherens junction. The protein localises to the cell membrane. Its subcellular location is the lamellipodium. The protein resides in the filopodium. It is found in the ruffle membrane. In terms of biological role, seems to act as a scaffold protein in multiple signaling pathways. Modulates excitatory synaptic transmission and dendritic spine morphology. Binds to actin filaments (F-actin) and shows cross-linking activity. Binds along the sides of the F-actin. May play an important role in linking the actin cytoskeleton to the plasma membrane at the synaptic junction. Believed to target protein phosphatase 1/PP1 to dendritic spines, which are rich in F-actin, and regulates its specificity toward ion channels and other substrates, such as AMPA-type and NMDA-type glutamate receptors. Plays a role in regulation of G-protein coupled receptor signaling, including dopamine D2 receptors and alpha-adrenergic receptors. May establish a signaling complex for dopaminergic neurotransmission through D2 receptors by linking receptors downstream signaling molecules and the actin cytoskeleton. Binds to ADRA1B and RGS2 and mediates regulation of ADRA1B signaling. May confer to Rac signaling specificity by binding to both, RacGEFs and Rac effector proteins. Probably regulates p70 S6 kinase activity by forming a complex with TIAM1. Required for hepatocyte growth factor (HGF)-induced cell migration. This Homo sapiens (Human) protein is Neurabin-2 (PPP1R9B).